A 552-amino-acid chain; its full sequence is 4-coumarate--CoA ligase-like 3 (552 aa).

The ATP site is built by S207, S208, G209, T210, T211, and K215. Residue F252 participates in (E)-4-coumaroyl-AMP binding. Residue R273 participates in CoA binding. Positions 275–346 (GLDDMMQAVE…EKYPTVNIFQ (72 aa)) are SBD1. (E)-4-coumaroyl-AMP-binding residues include G324, Q346, G347, and T351. ATP is bound by residues Q346, G347, T351, D432, and R447. Positions 347–411 (GYALTESHGS…LKGPSISKGY (65 aa)) are SBD2. (E)-4-coumaroyl-AMP is bound by residues K449 and K453. Residues K455 and G456 each coordinate CoA. Residue K538 coordinates ATP. The Microbody targeting signal signature appears at 550–552 (SKL).

This sequence belongs to the ATP-dependent AMP-binding enzyme family. The cofactor is Mg(2+).

It is found in the peroxisome. The enzyme catalyses (E)-4-coumarate + ATP + CoA = (E)-4-coumaroyl-CoA + AMP + diphosphate. It catalyses the reaction (E)-4-coumarate + ATP + H(+) = (E)-4-coumaroyl-AMP + diphosphate. The catalysed reaction is (E)-4-coumaroyl-AMP + CoA = (E)-4-coumaroyl-CoA + AMP + H(+). In terms of biological role, carboxylate--CoA ligase that may use 4-coumarate as substrate. Follows a two-step reaction mechanism, wherein the carboxylate substrate first undergoes adenylation by ATP, followed by a thioesterification in the presence of CoA to yield the final CoA thioester. This is 4-coumarate--CoA ligase-like 3 from Arabidopsis thaliana (Mouse-ear cress).